A 220-amino-acid chain; its full sequence is Histone deacetylase complex subunit SAP30 (220 aa).

An interaction with NCOR1 region spans residues 1 to 129; that stretch reads MNGFTPEEMS…QSVRNRRKRK (129 aa). The residue at position 5 (threonine 5) is a Phosphothreonine. The segment at 67 to 115 adopts an Atypical zinc-finger fold; the sequence is CCLREDGERCGRAAGNASFSKRIQKSISQKKVKIELDKSARHLYICDYH. Lysine 87 participates in a covalent cross-link: Glycyl lysine isopeptide (Lys-Gly) (interchain with G-Cter in SUMO2). A disordered region spans residues 123–143; it reads RNRRKRKGSDDDGGDSPVQDI. The tract at residues 130–220 is interaction with SIN3A; sequence GSDDDGGDSP…SDLKADSGVH (91 aa). Serine 131 and serine 138 each carry phosphoserine. Position 145 is a phosphothreonine (threonine 145). Residues lysine 194 and lysine 214 each participate in a glycyl lysine isopeptide (Lys-Gly) (interchain with G-Cter in SUMO2) cross-link.

This sequence belongs to the SAP30 family. As to quaternary structure, component of the histone deacetylase complex that includes at least SIN3A, HDAC1 and HDAC2. Found in a complex composed of at least SINHCAF, SIN3A, HDAC1, SAP30, RBBP4, OGT and TET1. Interacts with HDAC1. Interacts with SIN3A, SIN3B, HDAC2, RBBP4 and NCOR1. Interacts directly with SAMSN1. Interacts with HCFC1. Interacts with SAP30BP.

The protein resides in the nucleus. Involved in the functional recruitment of the Sin3-histone deacetylase complex (HDAC) to a specific subset of N-CoR corepressor complexes. Capable of transcription repression by N-CoR. Active in deacetylating core histone octamers (when in a complex) but inactive in deacetylating nucleosomal histones. The polypeptide is Histone deacetylase complex subunit SAP30 (Mus musculus (Mouse)).